A 274-amino-acid chain; its full sequence is MNPEHSPLGKATVYAAQYDASLLFPIPRAGAREQLGITSALPFFGTDIWNAYELSWLNARGKPQIAVATFYVPAESPNIVESKSFKLYLGSFAQTTFDSIDAVRDTLKRDVSAACGATVSVQLVSPHDFGKLEMEELDGLSLDRLDLDTDVYEPDPSLLKAAEDEAPVEETLVSDLLRSNCPVTGQPDWGSVQIHYVGPQIDHAGLLRYIISFRNHTGFHEQCVERIFLDILHACKPVKLAVYARYTRRGGLDINPFRTNYNQPMPDNARNARQ.

80–82 lines the substrate pocket; the sequence is VES. 82-83 is a binding site for NADPH; the sequence is SK. Cys-181 serves as the catalytic Thioimide intermediate. Residue Asp-188 is the Proton donor of the active site. 220 to 221 provides a ligand contact to substrate; the sequence is HE. 249-250 provides a ligand contact to NADPH; it reads RG.

It belongs to the GTP cyclohydrolase I family. QueF type 2 subfamily. In terms of assembly, homodimer.

Its subcellular location is the cytoplasm. The catalysed reaction is 7-aminomethyl-7-carbaguanine + 2 NADP(+) = 7-cyano-7-deazaguanine + 2 NADPH + 3 H(+). It functions in the pathway tRNA modification; tRNA-queuosine biosynthesis. Catalyzes the NADPH-dependent reduction of 7-cyano-7-deazaguanine (preQ0) to 7-aminomethyl-7-deazaguanine (preQ1). This Burkholderia lata (strain ATCC 17760 / DSM 23089 / LMG 22485 / NCIMB 9086 / R18194 / 383) protein is NADPH-dependent 7-cyano-7-deazaguanine reductase.